The sequence spans 543 residues: Probable protein kinase UbiB (543 aa).

In terms of domain architecture, Protein kinase spans 123–501 (DFDIVPLASA…KRQQAKGQFL (379 aa)). ATP contacts are provided by residues 129–137 (LASASIAQV) and Lys152. Asp287 serves as the catalytic Proton acceptor. Residues 517-539 (TSNITALASISAATGVTFWLLSW) form a helical membrane-spanning segment.

Belongs to the ABC1 family. UbiB subfamily.

It localises to the cell inner membrane. The protein operates within cofactor biosynthesis; ubiquinone biosynthesis [regulation]. In terms of biological role, is probably a protein kinase regulator of UbiI activity which is involved in aerobic coenzyme Q (ubiquinone) biosynthesis. The sequence is that of Probable protein kinase UbiB from Aliivibrio salmonicida (strain LFI1238) (Vibrio salmonicida (strain LFI1238)).